The sequence spans 179 residues: Large ribosomal subunit protein uL6 (179 aa).

It belongs to the universal ribosomal protein uL6 family. In terms of assembly, part of the 50S ribosomal subunit.

In terms of biological role, this protein binds to the 23S rRNA, and is important in its secondary structure. It is located near the subunit interface in the base of the L7/L12 stalk, and near the tRNA binding site of the peptidyltransferase center. This Leptospira borgpetersenii serovar Hardjo-bovis (strain JB197) protein is Large ribosomal subunit protein uL6.